Consider the following 797-residue polypeptide: Inactive dipeptidyl peptidase 10 (797 aa).

The disordered stretch occupies residues M1–P28. Residues M1 to K34 lie on the Cytoplasmic side of the membrane. Residues G35–I55 traverse the membrane as a helical; Signal-anchor for type II membrane protein segment. The Extracellular segment spans residues L56–E797. N-linked (GlcNAc...) asparagine glycans are attached at residues N64, N91, N112, and N120. Phosphotyrosine occurs at positions 139 and 144. N258, N343, N518, and N749 each carry an N-linked (GlcNAc...) asparagine glycan.

The protein belongs to the peptidase S9B family. DPPIV subfamily. As to quaternary structure, may form oligomers. Interacts with KCND1 and KCND2. Post-translationally, N-glycosylation is important for cell surface expression, specially at Asn-258, which is crucial. In terms of tissue distribution, detected in brain cortex (at protein level). Expressed in the brain, predominantly by neurons and not by glia.

Its subcellular location is the cell membrane. Functionally, promotes cell surface expression of the potassium channel KCND2. Modulates the activity and gating characteristics of the potassium channel KCND2. Has no dipeptidyl aminopeptidase activity. The protein is Inactive dipeptidyl peptidase 10 (Dpp10) of Mus musculus (Mouse).